The sequence spans 115 residues: Phosphoribosyl-AMP cyclohydrolase (115 aa).

D80 provides a ligand contact to Mg(2+). C81 serves as a coordination point for Zn(2+). Mg(2+)-binding residues include D82 and D84. Residues C97 and C104 each coordinate Zn(2+).

Belongs to the PRA-CH family. As to quaternary structure, homodimer. It depends on Mg(2+) as a cofactor. Zn(2+) is required as a cofactor.

It localises to the cytoplasm. The catalysed reaction is 1-(5-phospho-beta-D-ribosyl)-5'-AMP + H2O = 1-(5-phospho-beta-D-ribosyl)-5-[(5-phospho-beta-D-ribosylamino)methylideneamino]imidazole-4-carboxamide. It functions in the pathway amino-acid biosynthesis; L-histidine biosynthesis; L-histidine from 5-phospho-alpha-D-ribose 1-diphosphate: step 3/9. In terms of biological role, catalyzes the hydrolysis of the adenine ring of phosphoribosyl-AMP. The sequence is that of Phosphoribosyl-AMP cyclohydrolase from Nocardia farcinica (strain IFM 10152).